A 228-amino-acid chain; its full sequence is Glucose-induced degradation protein 8-A homolog (228 aa).

The LisH domain maps to 25–57 (QRADMNRLIMNYLVTEGFKEAAEKFRMESGIEP). Residues 63–120 (SLDERIKIREMVLKGQIQEAIALINSLHPELLDTNRYLYFHLQQQHLIELIRLRETEA) enclose the CTLH domain.

Belongs to the GID8 family. In terms of assembly, identified in the CTLH complex that contains at least MAEA, RMND5A (or alternatively its paralog RMND5B), GID8, WDR26, and RANBP9 and/or RANBP10. Interacts with CTNNB1.

Its function is as follows. Core component of the CTLH E3 ubiquitin-protein ligase complex that selectively accepts ubiquitin from UBE2H and mediates ubiquitination and subsequent proteasomal degradation of target proteins. Acts as a positive regulator of Wnt signaling pathway by promoting beta-catenin (CTNNB1) nuclear accumulation. Required for normal Wnt signaling and normal dorsoventral patterning during embryogenesis. The polypeptide is Glucose-induced degradation protein 8-A homolog (gid8a) (Danio rerio (Zebrafish)).